Here is a 774-residue protein sequence, read N- to C-terminus: Ion-translocating oxidoreductase complex subunit C (774 aa).

2 4Fe-4S ferredoxin-type domains span residues 368–398 and 408–437; these read ELTS…QQLQ and KCEE…VQYY. Positions 378, 381, 384, 388, 417, 420, 423, and 427 each coordinate [4Fe-4S] cluster. Over residues 459 to 490 the composition is skewed to basic and acidic residues; sequence ARFEEKKARMERDKAERENRFKQAAEDRRKEM. Disordered regions lie at residues 459-496 and 533-774; these read ARFE…QGGS and AKQA…EEKD. A compositionally biased stretch (low complexity) spans 533–545; sequence AKQAEAAQSGASE. Over residues 550–572 the composition is skewed to basic and acidic residues; the sequence is EMAKLREERKRQARERKAQKGEV. Low complexity predominate over residues 605–618; it reads TESAAQPAQATPSS. Polar residues-rich tracts occupy residues 645-658, 686-698, 725-738, and 762-774; these read TEST…TPSS, ESAA…TPSS, TESA…TPSS, and QQSS…EEKD.

Belongs to the 4Fe4S bacterial-type ferredoxin family. RnfC subfamily. As to quaternary structure, the complex is composed of six subunits: RnfA, RnfB, RnfC, RnfD, RnfE and RnfG. It depends on [4Fe-4S] cluster as a cofactor.

Its subcellular location is the cell inner membrane. Part of a membrane-bound complex that couples electron transfer with translocation of ions across the membrane. The chain is Ion-translocating oxidoreductase complex subunit C from Vibrio cholerae serotype O1 (strain ATCC 39315 / El Tor Inaba N16961).